The following is a 144-amino-acid chain: Large ribosomal subunit protein uL16 (144 aa).

The protein belongs to the universal ribosomal protein uL16 family. In terms of assembly, part of the 50S ribosomal subunit.

In terms of biological role, binds 23S rRNA and is also seen to make contacts with the A and possibly P site tRNAs. The protein is Large ribosomal subunit protein uL16 of Clostridium perfringens (strain ATCC 13124 / DSM 756 / JCM 1290 / NCIMB 6125 / NCTC 8237 / Type A).